The chain runs to 876 residues: AP-5 complex subunit beta-1 (876 aa).

In terms of assembly, probably part of the adaptor protein complex 5 (AP-5), a tetramer composed of AP5B1, AP5M1, AP5S1 and AP5Z1. Interacts with ZFYVE26 and SPG11.

In terms of biological role, as part of AP-5, a probable fifth adaptor protein complex, it may be involved in endosomal transport. The protein is AP-5 complex subunit beta-1 (Ap5b1) of Rattus norvegicus (Rat).